A 275-amino-acid polypeptide reads, in one-letter code: WIMGHMVNAIYQIDEFVDLGANAIETDVEFSSSGKAKYTYHGVPCDCFRWCKKWENIDGFLEALRRATTPGDSKYRKELILVVLDLKLDYVYLSDAYDAGKDLAQRLVKHYWNGGRNGGRAYILLSVPVVEYYRLITGFRAHLMNEGYKDLLAKVGYDFSEDTYLSTIHDGFRNAGVRDKDHIWQSDGISNCFARTLTRLKEAVSNRDSTDGYSNKVYYWTVDKETSITDAINAGADGIMTNHPDRVINVPKDDEIKKKFRLARYRDNPWKTFRK.

His5 is a catalytic residue. The Mg(2+) site is built by Glu25 and Asp27. His41 (nucleophile) is an active-site residue. Disulfide bonds link Cys45–Cys51 and Cys47–Cys192. Residue Asp85 coordinates Mg(2+).

Belongs to the arthropod phospholipase D family. Class II subfamily. Mg(2+) is required as a cofactor. As to expression, expressed by the venom gland.

The protein resides in the secreted. The catalysed reaction is an N-(acyl)-sphingosylphosphocholine = an N-(acyl)-sphingosyl-1,3-cyclic phosphate + choline. The enzyme catalyses an N-(acyl)-sphingosylphosphoethanolamine = an N-(acyl)-sphingosyl-1,3-cyclic phosphate + ethanolamine. It catalyses the reaction a 1-acyl-sn-glycero-3-phosphocholine = a 1-acyl-sn-glycero-2,3-cyclic phosphate + choline. It carries out the reaction a 1-acyl-sn-glycero-3-phosphoethanolamine = a 1-acyl-sn-glycero-2,3-cyclic phosphate + ethanolamine. In terms of biological role, dermonecrotic toxins cleave the phosphodiester linkage between the phosphate and headgroup of certain phospholipids (sphingolipid and lysolipid substrates), forming an alcohol (often choline) and a cyclic phosphate. This toxin acts on sphingomyelin (SM). It may also act on ceramide phosphoethanolamine (CPE), lysophosphatidylcholine (LPC) and lysophosphatidylethanolamine (LPE), but not on lysophosphatidylserine (LPS), and lysophosphatidylglycerol (LPG). It acts by transphosphatidylation, releasing exclusively cyclic phosphate products as second products. Induces dermonecrosis, hemolysis, increased vascular permeability, edema, inflammatory response, and platelet aggregation. This is Dermonecrotic toxin LhSicTox-alphaVI1i from Loxosceles hirsuta (Recluse spider).